The sequence spans 875 residues: Probable inorganic carbon transporter subunit DabA (875 aa).

Residues C380, D382, H563, and C578 each coordinate Zn(2+).

It belongs to the inorganic carbon transporter (TC 9.A.2) DabA family. In terms of assembly, forms a complex with DabB. Zn(2+) serves as cofactor.

It is found in the cell membrane. Part of an energy-coupled inorganic carbon pump. The sequence is that of Probable inorganic carbon transporter subunit DabA from Geobacillus thermodenitrificans (strain NG80-2).